The chain runs to 786 residues: Endonuclease MutS2 (786 aa).

Residue 332-339 (GPNTGGKT) coordinates ATP. Residues 711-786 (IDLRGMDSEE…GTGVTVVILK (76 aa)) form the Smr domain.

It belongs to the DNA mismatch repair MutS family. MutS2 subfamily. As to quaternary structure, homodimer. Binds to stalled ribosomes, contacting rRNA.

Functionally, endonuclease that is involved in the suppression of homologous recombination and thus may have a key role in the control of bacterial genetic diversity. Acts as a ribosome collision sensor, splitting the ribosome into its 2 subunits. Detects stalled/collided 70S ribosomes which it binds and splits by an ATP-hydrolysis driven conformational change. Acts upstream of the ribosome quality control system (RQC), a ribosome-associated complex that mediates the extraction of incompletely synthesized nascent chains from stalled ribosomes and their subsequent degradation. Probably generates substrates for RQC. This Clostridium perfringens (strain SM101 / Type A) protein is Endonuclease MutS2.